The sequence spans 742 residues: MRSKLGTHFKKASVISGSVTQSKVNQSTFSRSIIGTSSRKSLNLHAESKMGERNLSMVSKQSIKIFDDDGKDVSPQPLFQAEPGTVPQKQNKLFTPPDASGIGASDIFSSISLQHTAFNASFVGPFTRSTFGASTVSRSSKETESMTEDIEETGFKREIASLSEIQGKQHEMQPTEEDLDKIINIFLTDTETLWLLDMPPALTATDSENADLVRVRNQAYEDLCKDKVGNDKYIERMMQTFSGAPKNKEVQCDRIILEDTGVMASVWDLYDSYLSPESLPMKEAVDRAIETKNISSSRLSESRGTQSMNSLGRGDSFSSSIADIERLALTRIPDEVEPDSEEILKSEKFLQDLFFMERVVVENTFQSRLAAYRQLPVIADPDEDEDKISAMPSNIVSPSLNRLWSFACDVTKGHNVSSMSWNKKNSDLLAVGYGQFGFAEQKGGMACCWSLKNIMWPERIFHCECGVTAVDFSAVHPNLLAVGMYNGTVAIYNVQNNEDFPVLDSSDNPNKHTSPVWQLKWIEHDRGNLGDDKGEILVSVCADGRITRWHIRKGLDCNDLMKLKRTGSGKSKKSSNEKERKGEAFISRQAPGMCFDFLPKDSNIYLAGTEEGHIHKCSCSYNEQFLDTYRGHKGPVYKIVWSPFCPDVFLSCSADWCIHLWQQDVLLPILTFSNTTNAVYDIMWSPSSALMFGAVSENRVEIWDLGVSIIDPVIVNEANPGVKLTSILFAKNTDCVLIGDSD.

WD repeat units lie at residues 462-502 (HCEC…DFPV), 511-559 (KHTS…DCND), 631-671 (GHKG…PILT), and 674-713 (NTTN…IDPV).

As to quaternary structure, part of the multisubunit axonemal dynein complex formed at least of two heavy chains and a number of intermediate and light chains. Associated with axonemal dynein subunits such as, DNAH2, DNAI3, and DYNLT1.

It localises to the cytoplasm. It is found in the cytoskeleton. The protein resides in the flagellum axoneme. Its subcellular location is the cilium axoneme. The protein localises to the dynein axonemal particle. Plays a critical role in the assembly of axonemal dynein complex, thereby playing a role in ciliary motility. The chain is Dynein axonemal intermediate chain 4 from Xenopus laevis (African clawed frog).